A 162-amino-acid chain; its full sequence is Probable chemoreceptor glutamine deamidase CheD (162 aa).

Belongs to the CheD family.

It catalyses the reaction L-glutaminyl-[protein] + H2O = L-glutamyl-[protein] + NH4(+). Functionally, probably deamidates glutamine residues to glutamate on methyl-accepting chemotaxis receptors (MCPs), playing an important role in chemotaxis. The sequence is that of Probable chemoreceptor glutamine deamidase CheD from Clostridium botulinum (strain ATCC 19397 / Type A).